A 784-amino-acid polypeptide reads, in one-letter code: DNA repair and recombination protein RAD54-like (784 aa).

A disordered region spans residues 1–54; that stretch reads MRRSLAPSQRGPMRPESRHSFTPPLLKKNKRSCQQELEREQELDRKRQSALRDA. The tract at residues 2–9 is required for chromatin remodeling, strand pairing activities and coupling of ATPase activity; the sequence is RRSLAPSQ. Phosphoserine is present on S20. Position 22 is a phosphothreonine (T22). The span at 36–47 shows a compositional bias: basic and acidic residues; sequence ELEREQELDRKR. The region spanning 172-346 is the Helicase ATP-binding domain; sequence EGKRGNFNGC…YSLVNFVNPE (175 aa). ATP is bound at residue 185–192; it reads DEMGLGKT. The DEGH box signature appears at 297 to 300; the sequence is DEGH. The Helicase C-terminal domain maps to 503–660; sequence LLDFMLAAIR…NNESAEKHFT (158 aa). A disordered region spans residues 751 to 784; that stretch reads EEAASEQPEEKPDRRKRPSTPPSDDSADEDFLGF. The span at 775-784 shows a compositional bias: acidic residues; the sequence is DSADEDFLGF.

Belongs to the SNF2/RAD54 helicase family. As to quaternary structure, interacts (via N-terminus) with spn-A/Rad51.

Its subcellular location is the nucleus. Functionally, involved in mitotic DNA repair and meiotic recombination. Functions in the recombinational DNA repair pathway. Essential for interhomolog gene conversion (GC), but may have a less important role in intersister GC than spn-A/Rad51. In the presence of DNA, spn-A/Rad51 enhances the ATPase activity of okr/Rad54. The polypeptide is DNA repair and recombination protein RAD54-like (Drosophila yakuba (Fruit fly)).